We begin with the raw amino-acid sequence, 525 residues long: Mitogen-activated protein kinase kinase 5 (525 aa).

The region spanning 59-317 (ETEGGFLGKG…CTELLRHPFI (259 aa)) is the Protein kinase domain. ATP contacts are provided by residues 65 to 73 (LGKGSSGSV) and Lys-88. Residue Asp-178 is the Proton acceptor of the active site. Low complexity predominate over residues 358-367 (SALPLASEGG). Disordered regions lie at residues 358–392 (SALPLASEGGTPKATSPSPAPVSPLTLSCPLERHD) and 438–468 (SASVATDSGEGGGAAGVSAASLDNGQAAQHR).

This sequence belongs to the protein kinase superfamily. STE Ser/Thr protein kinase family. MAP kinase kinase subfamily. Mg(2+) serves as cofactor.

It carries out the reaction L-tyrosyl-[protein] + ATP = O-phospho-L-tyrosyl-[protein] + ADP + H(+). The enzyme catalyses L-seryl-[protein] + ATP = O-phospho-L-seryl-[protein] + ADP + H(+). The catalysed reaction is L-threonyl-[protein] + ATP = O-phospho-L-threonyl-[protein] + ADP + H(+). Protein kinase which phosphorylates and activates MPK4 in vitro. The sequence is that of Mitogen-activated protein kinase kinase 5 from Leishmania mexicana.